The chain runs to 143 residues: Large ribosomal subunit protein uL16c (143 aa).

It belongs to the universal ribosomal protein uL16 family. As to quaternary structure, part of the 50S ribosomal subunit.

It is found in the plastid. The protein localises to the chloroplast. This chain is Large ribosomal subunit protein uL16c, found in Cyanidioschyzon merolae (strain NIES-3377 / 10D) (Unicellular red alga).